The following is a 481-amino-acid chain: Aspartyl/glutamyl-tRNA(Asn/Gln) amidotransferase subunit B (481 aa).

This sequence belongs to the GatB/GatE family. GatB subfamily. As to quaternary structure, heterotrimer of A, B and C subunits.

The catalysed reaction is L-glutamyl-tRNA(Gln) + L-glutamine + ATP + H2O = L-glutaminyl-tRNA(Gln) + L-glutamate + ADP + phosphate + H(+). The enzyme catalyses L-aspartyl-tRNA(Asn) + L-glutamine + ATP + H2O = L-asparaginyl-tRNA(Asn) + L-glutamate + ADP + phosphate + 2 H(+). Allows the formation of correctly charged Asn-tRNA(Asn) or Gln-tRNA(Gln) through the transamidation of misacylated Asp-tRNA(Asn) or Glu-tRNA(Gln) in organisms which lack either or both of asparaginyl-tRNA or glutaminyl-tRNA synthetases. The reaction takes place in the presence of glutamine and ATP through an activated phospho-Asp-tRNA(Asn) or phospho-Glu-tRNA(Gln). In Pseudomonas putida (strain ATCC 700007 / DSM 6899 / JCM 31910 / BCRC 17059 / LMG 24140 / F1), this protein is Aspartyl/glutamyl-tRNA(Asn/Gln) amidotransferase subunit B.